A 100-amino-acid chain; its full sequence is Small ribosomal subunit protein uS14c (100 aa).

This sequence belongs to the universal ribosomal protein uS14 family. As to quaternary structure, part of the 30S ribosomal subunit.

It is found in the plastid. It localises to the chloroplast. Functionally, binds 16S rRNA, required for the assembly of 30S particles. In Tetradesmus obliquus (Green alga), this protein is Small ribosomal subunit protein uS14c.